The sequence spans 228 residues: Cytidylate kinase (228 aa).

17-25 serves as a coordination point for ATP; sequence GPSASGKGT.

The protein belongs to the cytidylate kinase family. Type 1 subfamily.

The protein localises to the cytoplasm. It catalyses the reaction CMP + ATP = CDP + ADP. The enzyme catalyses dCMP + ATP = dCDP + ADP. This is Cytidylate kinase from Paraburkholderia phytofirmans (strain DSM 17436 / LMG 22146 / PsJN) (Burkholderia phytofirmans).